Consider the following 164-residue polypeptide: Putative Cys-tRNA(Pro)/Cys-tRNA(Cys) deacylase EbsC (164 aa).

This sequence belongs to the prolyl-tRNA editing family. YbaK/EbsC subfamily.

In terms of biological role, affects the expression of the receptor, named binding substance, that mediates mating aggregate formation. Could be a regulatory protein that suppresses the function or expression of ebsA and/or ebsMB. In Enterococcus faecalis (strain ATCC 700802 / V583), this protein is Putative Cys-tRNA(Pro)/Cys-tRNA(Cys) deacylase EbsC.